Here is a 975-residue protein sequence, read N- to C-terminus: Synaptopodin 2-like protein (975 aa).

Residues 6-85 (EVQVTLAGGA…QLVLTVRRVT (80 aa)) enclose the PDZ domain. Disordered regions lie at residues 18-41 (GFRL…QAGR), 86-214 (DEGS…PAEA), and 314-349 (AGTG…QSDW). Phosphoserine is present on residues Ser-105 and Ser-108. The residue at position 138 (Thr-138) is a Phosphothreonine. Residues Ser-140, Ser-163, Ser-175, and Ser-177 each carry the phosphoserine modification. A compositionally biased stretch (polar residues) spans 187–200 (GSPSQGDSRVSSPS). The segment covering 202 to 214 (EEGAALQPPPAEA) has biased composition (low complexity). Positions 339–349 (DARSLTNQSDW) are enriched in polar residues. 5 positions are modified to phosphoserine: Ser-342, Ser-347, Ser-371, Ser-378, and Ser-381. Omega-N-methylarginine occurs at positions 383, 463, 466, and 476. The tract at residues 491-649 (KVNEGLGSTS…ETKNSPNPEL (159 aa)) is disordered. Over residues 502 to 516 (APSPFAAPPQGPTPL) the composition is skewed to pro residues. Polar residues predominate over residues 519–528 (FTTVVPSHTP). Low complexity-rich tracts occupy residues 530–540 (SGASSSTQRSS) and 571–580 (SAAAMTSTAS). Phosphoserine occurs at positions 667 and 675. The disordered stretch occupies residues 687-731 (LGGRSYKTLPQVSPKTPPPMAPKTPPPTTPKTPPPVAPKPGSRGL). Residues 701 to 724 (KTPPPMAPKTPPPTTPKTPPPVAP) show a composition bias toward pro residues. Phosphothreonine occurs at positions 702 and 710. Arg-754 carries the omega-N-methylarginine modification. Positions 772–797 (EATSGSSLNPGLRPRSPSPTPSLPPS) are disordered. Phosphoserine is present on residues Ser-787 and Ser-789. Residue Thr-791 is modified to Phosphothreonine. An omega-N-methylarginine mark is found at Arg-805, Arg-825, and Arg-888. Ser-890 carries the post-translational modification Phosphoserine. Thr-891 and Thr-897 each carry phosphothreonine. Arg-909 is subject to Omega-N-methylarginine. The residue at position 920 (Arg-920) is an Asymmetric dimethylarginine; alternate. Omega-N-methylarginine; alternate is present on Arg-920. Arg-953 and Arg-955 each carry omega-N-methylarginine.

This sequence belongs to the synaptopodin family.

The protein localises to the cytoplasm. It is found in the cytoskeleton. Actin-associated protein that may play a role in modulating actin-based shape. The protein is Synaptopodin 2-like protein (Synpo2l) of Mus musculus (Mouse).